The primary structure comprises 134 residues: Peptide methionine sulfoxide reductase MsrB (134 aa).

A MsrB domain is found at 9–131; that stretch reads DEYWRDKLDA…NSASIQLQKE (123 aa). Residues Cys48, Cys51, Cys97, and Cys100 each coordinate Zn(2+). The Nucleophile role is filled by Cys120.

Belongs to the MsrB Met sulfoxide reductase family. Zn(2+) is required as a cofactor.

It catalyses the reaction L-methionyl-[protein] + [thioredoxin]-disulfide + H2O = L-methionyl-(R)-S-oxide-[protein] + [thioredoxin]-dithiol. In Saccharophagus degradans (strain 2-40 / ATCC 43961 / DSM 17024), this protein is Peptide methionine sulfoxide reductase MsrB.